The following is a 257-amino-acid chain: uncharacterized protein (257 aa).

Disordered stretches follow at residues M1–C164 and T225–A257. A compositionally biased stretch (basic and acidic residues) spans C10–K28. The segment covering R54 to S65 has biased composition (basic residues). A compositionally biased stretch (pro residues) spans R125–A139. Over residues R144–G162 the composition is skewed to basic residues.

This is an uncharacterized protein from Homo sapiens (Human).